Consider the following 731-residue polypeptide: E3 ubiquitin-protein ligase COP1 (731 aa).

The disordered stretch occupies residues 1–40; that stretch reads MSGSRQAGSGSAGTSPGSSAASSVTSASSSLSSSPSPPSV. The Nuclear localization signal 1 signature appears at 109–113; sequence GSRKR. The RING-type zinc-finger motif lies at 136–174; sequence CPICFDMIEEAYMTKCGHSFCYKCIHQSLEDNNRCPKCN. The Nuclear localization signal 2 motif lies at 195–206; the sequence is KQKQRFEEKRFK. Positions 233–301 form a coiled coil; it reads LDLANVNLML…DIKRVEEMSG (69 aa). Positions 235–245 match the Nuclear export signal motif; the sequence is LANVNLMLELL. The interval 305–325 is disordered; that stretch reads PVSEDSTVPQFEAPSPSHSSI. WD repeat units lie at residues 419–458, 468–508, 511–551, 553–593, 597–635, 638–677, and 691–729; these read NGSS…QDAV, TCNS…RSKV, EHEK…SVAS, EAKA…QPIM, GHRK…CLRS, GHIN…TLLT, and RKED…KVLE. An interaction with TRIB1 region spans residues 643–645; it reads KNF.

This sequence belongs to the COP1 family. In terms of assembly, homodimer. Homodimerization is mediated by the coiled coil domain. Component of the DCX DET1-COP1 ubiquitin ligase complex at least composed of RBX1, DET1, DDB1, CUL4A and COP1. Isoform 2 does not interact with CUL4A but still binds to RBX1, suggesting that the interaction may be mediated by another cullin protein. Isoform 1 and isoform 2 interact with CUL5 but not with CUL1, CUL2 not CUL3. Interacts with bZIP transcription factors JUN, JUNB and JUND but not with FOS, ATF2 nor XBP1. Interacts with p53 (TP53). Interacts with COPS6; this interaction stabilizes RFWD2 through reducing its auto-ubiquitination and decelerating its turnover rate. Interacts with SFN; this interaction leads to SFN degradation. Isoform 4 forms heterodimers with isoform 1, preventing its association with DET1. Interacts with p53/TP53 and MTA1. Interacts with TRIB1 (via C-terminus) and TRIB2. In terms of processing, autoubiquitinated. MTA1 destabilizes it by promoting its autoubiquitination. As to expression, ubiquitously expressed at low level. Expressed at higher level in testis, placenta, skeletal muscle and heart.

The protein resides in the nucleus speckle. It is found in the cytoplasm. It catalyses the reaction S-ubiquitinyl-[E2 ubiquitin-conjugating enzyme]-L-cysteine + [acceptor protein]-L-lysine = [E2 ubiquitin-conjugating enzyme]-L-cysteine + N(6)-ubiquitinyl-[acceptor protein]-L-lysine.. Its pathway is protein modification; protein ubiquitination. TRIB1 competes with substrates for RFWD2 binding. Functionally, E3 ubiquitin-protein ligase that mediates ubiquitination and subsequent proteasomal degradation of target proteins. E3 ubiquitin ligases accept ubiquitin from an E2 ubiquitin-conjugating enzyme in the form of a thioester and then directly transfers the ubiquitin to targeted substrates. Involved in JUN ubiquitination and degradation. Directly involved in p53 (TP53) ubiquitination and degradation, thereby abolishing p53-dependent transcription and apoptosis. Ubiquitinates p53 independently of MDM2 or RCHY1. Probably mediates E3 ubiquitin ligase activity by functioning as the essential RING domain subunit of larger E3 complexes. In contrast, it does not constitute the catalytic RING subunit in the DCX DET1-COP1 complex that negatively regulates JUN, the ubiquitin ligase activity being mediated by RBX1. Involved in 14-3-3 protein sigma/SFN ubiquitination and proteasomal degradation, leading to AKT activation and promotion of cell survival. Ubiquitinates MTA1 leading to its proteasomal degradation. Upon binding to TRIB1, ubiquitinates CEBPA, which lacks a canonical COP1-binding motif. In Homo sapiens (Human), this protein is E3 ubiquitin-protein ligase COP1.